We begin with the raw amino-acid sequence, 209 residues long: A-type ATP synthase subunit D (209 aa).

It belongs to the V-ATPase D subunit family. As to quaternary structure, has multiple subunits, A(3), B(3), C, D, E, F, G, I and K(x); there may be a few other subunits as well.

It localises to the cell membrane. Functionally, component of the A-type ATP synthase that produces ATP from ADP in the presence of a proton gradient across the membrane. This chain is A-type ATP synthase subunit D, found in Methanosarcina mazei (strain ATCC BAA-159 / DSM 3647 / Goe1 / Go1 / JCM 11833 / OCM 88) (Methanosarcina frisia).